Here is a 749-residue protein sequence, read N- to C-terminus: Pectate disaccharide-lyase (749 aa).

An N-terminal signal peptide occupies residues 1–26 (MKYAASGLLSVALNSLLLLGSNQRFA). Ca(2+)-binding residues include Asp-538, Asp-562, Asp-563, and Asp-566. The active-site Proton acceptor is the Lys-595.

It belongs to the polysaccharide lyase 9 family. It depends on Ca(2+) as a cofactor.

It is found in the secreted. It carries out the reaction [(1-&gt;4)-alpha-D-galacturonosyl](n) = 4-(4-deoxy-alpha-D-galact-4-enuronosyl)-D-galacturonate + [(1-&gt;4)-alpha-D-galacturonosyl](n-2). With respect to regulation, activity on pectate is nearly completely inhibited by ethyleneglycol-bis-(P-aminoethyl ether) N,N'-tetraacetic acid (EGTA), EDTA or nitrilotriacetic acid. Activity is specifically restored by the addition of Ca(2+). Functionally, exo-cleaving lyase that catalyzes the digestion of pectate. Contributes to pectate catabolism but not to bacterial virulence. In vitro can also use citrus pectin and highly methyl-esterified Link pectin as substrates. The chain is Pectate disaccharide-lyase from Dickeya chrysanthemi (Pectobacterium chrysanthemi).